Here is a 475-residue protein sequence, read N- to C-terminus: Ribulose bisphosphate carboxylase large chain (475 aa).

Positions 1 to 2 are excised as a propeptide; that stretch reads MS. At Pro3 the chain carries N-acetylproline. The residue at position 14 (Lys14) is an N6,N6,N6-trimethyllysine. Positions 123 and 173 each coordinate substrate. The Proton acceptor role is filled by Lys175. Position 177 (Lys177) interacts with substrate. Residues Lys201, Asp203, and Glu204 each contribute to the Mg(2+) site. An N6-carboxylysine modification is found at Lys201. Catalysis depends on His294, which acts as the Proton acceptor. Substrate contacts are provided by Arg295, His327, and Ser379.

It belongs to the RuBisCO large chain family. Type I subfamily. In terms of assembly, heterohexadecamer of 8 large chains and 8 small chains; disulfide-linked. The disulfide link is formed within the large subunit homodimers. The cofactor is Mg(2+). The disulfide bond which can form in the large chain dimeric partners within the hexadecamer appears to be associated with oxidative stress and protein turnover.

It localises to the plastid. Its subcellular location is the chloroplast. The enzyme catalyses 2 (2R)-3-phosphoglycerate + 2 H(+) = D-ribulose 1,5-bisphosphate + CO2 + H2O. It catalyses the reaction D-ribulose 1,5-bisphosphate + O2 = 2-phosphoglycolate + (2R)-3-phosphoglycerate + 2 H(+). In terms of biological role, ruBisCO catalyzes two reactions: the carboxylation of D-ribulose 1,5-bisphosphate, the primary event in carbon dioxide fixation, as well as the oxidative fragmentation of the pentose substrate in the photorespiration process. Both reactions occur simultaneously and in competition at the same active site. The polypeptide is Ribulose bisphosphate carboxylase large chain (Oenothera argillicola (Appalachian evening primrose)).